Reading from the N-terminus, the 425-residue chain is Tyrosine--tRNA ligase (425 aa).

L-tyrosine is bound at residue Tyr-37. The short motif at 42–51 is the 'HIGH' region element; the sequence is PTADSLHLGH. Residues Tyr-175 and Gln-179 each contribute to the L-tyrosine site. The 'KMSKS' region motif lies at 235–239; it reads KFGKT. Residue Lys-238 participates in ATP binding. In terms of domain architecture, S4 RNA-binding spans 357–414; sequence ADLQQALVSAELVPSRGQARTMISSNAVTINGEKQADPEYTFSASDRLFDRYTLLRRG.

The protein belongs to the class-I aminoacyl-tRNA synthetase family. TyrS type 1 subfamily. In terms of assembly, homodimer.

It is found in the cytoplasm. The catalysed reaction is tRNA(Tyr) + L-tyrosine + ATP = L-tyrosyl-tRNA(Tyr) + AMP + diphosphate + H(+). Catalyzes the attachment of tyrosine to tRNA(Tyr) in a two-step reaction: tyrosine is first activated by ATP to form Tyr-AMP and then transferred to the acceptor end of tRNA(Tyr). This chain is Tyrosine--tRNA ligase, found in Pectobacterium carotovorum subsp. carotovorum (strain PC1).